The primary structure comprises 238 residues: Uridylate kinase (238 aa).

12–15 (KLSG) serves as a coordination point for ATP. Residues 20 to 25 (GEKGFG) are involved in allosteric activation by GTP. A UMP-binding site is contributed by glycine 54. Glycine 55 and arginine 59 together coordinate ATP. Residues aspartate 74 and 135-142 (TGSPYFST) contribute to the UMP site. 3 residues coordinate ATP: asparagine 163, tyrosine 169, and aspartate 172.

It belongs to the UMP kinase family. In terms of assembly, homohexamer.

It localises to the cytoplasm. It carries out the reaction UMP + ATP = UDP + ADP. The protein operates within pyrimidine metabolism; CTP biosynthesis via de novo pathway; UDP from UMP (UMPK route): step 1/1. Its activity is regulated as follows. Allosterically activated by GTP. Inhibited by UTP. Catalyzes the reversible phosphorylation of UMP to UDP. This is Uridylate kinase from Lactococcus lactis subsp. lactis (strain IL1403) (Streptococcus lactis).